We begin with the raw amino-acid sequence, 568 residues long: Potassium-transporting ATPase potassium-binding subunit (568 aa).

Transmembrane regions (helical) follow at residues 7–27, 65–85, 136–156, 179–199, 254–274, 285–305, 332–352, 354–374, 377–397, 423–443, 487–507, and 530–550; these read ITIGIFFLCVLALTRPLGGFL, HYALALLSFKIVCFVAVYAIL, GLTVQNFVSAAAGIAVAAAII, LYVLLPISVVLSLFYVFEGIP, LTNFVEMISIFAIGAGLTNVF, WAVFSAMSVLFFVGVTAVYWA, FGVAASALFAAVTTDASCGAV, AMHESFLPLGGMVPLINMMLG, IIGGVGAGLYGFILFAIIAVF, MLAVLCLPLVMLGFTAVAVVV, ITLGIGMMIGRFFVIVPALAI, and LFIGLVAGVIIIVGGLTFLPA.

The protein belongs to the KdpA family. As to quaternary structure, the system is composed of three essential subunits: KdpA, KdpB and KdpC.

It localises to the cell inner membrane. Part of the high-affinity ATP-driven potassium transport (or Kdp) system, which catalyzes the hydrolysis of ATP coupled with the electrogenic transport of potassium into the cytoplasm. This subunit binds the periplasmic potassium ions and delivers the ions to the membrane domain of KdpB through an intramembrane tunnel. The protein is Potassium-transporting ATPase potassium-binding subunit of Granulibacter bethesdensis (strain ATCC BAA-1260 / CGDNIH1).